Reading from the N-terminus, the 225-residue chain is Uracil-DNA glycosylase (225 aa).

Aspartate 65 serves as the catalytic Proton acceptor.

It belongs to the uracil-DNA glycosylase (UDG) superfamily. UNG family.

Its subcellular location is the cytoplasm. The enzyme catalyses Hydrolyzes single-stranded DNA or mismatched double-stranded DNA and polynucleotides, releasing free uracil.. Excises uracil residues from the DNA which can arise as a result of misincorporation of dUMP residues by DNA polymerase or due to deamination of cytosine. The chain is Uracil-DNA glycosylase from Bacillus mycoides (strain KBAB4) (Bacillus weihenstephanensis).